We begin with the raw amino-acid sequence, 1241 residues long: ATP-dependent helicase/nuclease subunit A (1241 aa).

Residues 12–485 (SQWTDDQWKA…IDLAKNFRSR (474 aa)) form the UvrD-like helicase ATP-binding domain. 33 to 40 (AAAGSGKT) is an ATP binding site. A UvrD-like helicase C-terminal domain is found at 505 to 805 (GEIDYDADAE…RIMTIHKSKG (301 aa)).

The protein belongs to the helicase family. AddA subfamily. As to quaternary structure, heterodimer of AddA and AddB/RexB. Requires Mg(2+) as cofactor.

The catalysed reaction is Couples ATP hydrolysis with the unwinding of duplex DNA by translocating in the 3'-5' direction.. The enzyme catalyses ATP + H2O = ADP + phosphate + H(+). Functionally, the heterodimer acts as both an ATP-dependent DNA helicase and an ATP-dependent, dual-direction single-stranded exonuclease. Recognizes the chi site generating a DNA molecule suitable for the initiation of homologous recombination. The AddA nuclease domain is required for chi fragment generation; this subunit has the helicase and 3' -&gt; 5' nuclease activities. The sequence is that of ATP-dependent helicase/nuclease subunit A from Bacillus anthracis.